The chain runs to 358 residues: Neuronal-specific septin-3 (358 aa).

The span at Met-1–Thr-10 shows a compositional bias: basic and acidic residues. The interval Met-1–Met-29 is disordered. In terms of domain architecture, Septin-type G spans Thr-58 to Asp-331. Positions Gly-68–Ser-75 are G1 motif. A GTP-binding site is contributed by Gly-68 to Ser-75. Phosphoserine is present on Ser-91. Thr-102 contributes to the GTP binding site. The tract at residues Asp-125–Gly-128 is G3 motif. The G4 motif stretch occupies residues Ala-207 to Asp-210. Residues Lys-208 to Glu-216, Gly-265, and Arg-280 each bind GTP.

This sequence belongs to the TRAFAC class TrmE-Era-EngA-EngB-Septin-like GTPase superfamily. Septin GTPase family. In terms of assembly, septins polymerize into heterooligomeric protein complexes that form filaments, and can associate with cellular membranes, actin filaments and microtubules. GTPase activity is required for filament formation. In terms of processing, phosphorylated by PKG on serine residues. Phosphorylated by PKG on Ser-91. Brain-specific, with highest expression in the hippocampal CA3 region (at protein level).

The protein localises to the cytoplasm. It is found in the cytoskeleton. It localises to the synapse. Functionally, filament-forming cytoskeletal GTPase. May play a role in cytokinesis (Potential). The polypeptide is Neuronal-specific septin-3 (Rattus norvegicus (Rat)).